The primary structure comprises 67 residues: uncharacterized protein (67 aa).

This is an uncharacterized protein from Dictyostelium discoideum (Social amoeba).